Here is a 510-residue protein sequence, read N- to C-terminus: ATP synthase subunit alpha 1 (510 aa).

An ATP-binding site is contributed by 169–176 (GDRQTGKT).

It belongs to the ATPase alpha/beta chains family. F-type ATPases have 2 components, CF(1) - the catalytic core - and CF(0) - the membrane proton channel. CF(1) has five subunits: alpha(3), beta(3), gamma(1), delta(1), epsilon(1). CF(0) has three main subunits: a(1), b(2) and c(9-12). The alpha and beta chains form an alternating ring which encloses part of the gamma chain. CF(1) is attached to CF(0) by a central stalk formed by the gamma and epsilon chains, while a peripheral stalk is formed by the delta and b chains.

Its subcellular location is the cell inner membrane. It catalyses the reaction ATP + H2O + 4 H(+)(in) = ADP + phosphate + 5 H(+)(out). Produces ATP from ADP in the presence of a proton gradient across the membrane. The alpha chain is a regulatory subunit. This chain is ATP synthase subunit alpha 1, found in Marinomonas sp. (strain MWYL1).